The primary structure comprises 361 residues: MNDGTDYRALLLADTPLIDVRAPIEFEQGAMPGAINLPLMMDDERAAVGTCYKRQGADAALALGHRLVCGDIRQQRLEAWKAAYQRFPNGYLCCARGGQRSHIVQRWLQETGIDCPLIEGGYKALRQTAIQATWQLAQKPILLIGGCTGSGKTQLVRQQPNGVDLEGLARHRGSSFGRTLKPQLSQASFENKLAVELLKINARQTLKRWVLEDEGRTIGANHLPECLRERMVQAPIAVVEDPFSLRLERLREEYFIRMHHDFTHAYGDEAGWQAYSEYLHHGLFAIRRRLGLQRFAELTDTLDRALAEQLSSGSTDGHMAWLVPLLNEYYDPMYRYQLEKKAANIVFRGTWQDVANWLKAQ.

The 124-residue stretch at 11–134 (LLADTPLIDV…LRQTAIQATW (124 aa)) folds into the Rhodanese domain. The S-selanylcysteine intermediate role is filled by C94.

This sequence belongs to the SelU family. As to quaternary structure, monomer.

It carries out the reaction 5-methylaminomethyl-2-thiouridine(34) in tRNA + selenophosphate + (2E)-geranyl diphosphate + H2O + H(+) = 5-methylaminomethyl-2-selenouridine(34) in tRNA + (2E)-thiogeraniol + phosphate + diphosphate. The enzyme catalyses 5-methylaminomethyl-2-thiouridine(34) in tRNA + (2E)-geranyl diphosphate = 5-methylaminomethyl-S-(2E)-geranyl-thiouridine(34) in tRNA + diphosphate. The catalysed reaction is 5-methylaminomethyl-S-(2E)-geranyl-thiouridine(34) in tRNA + selenophosphate + H(+) = 5-methylaminomethyl-2-(Se-phospho)selenouridine(34) in tRNA + (2E)-thiogeraniol. It catalyses the reaction 5-methylaminomethyl-2-(Se-phospho)selenouridine(34) in tRNA + H2O = 5-methylaminomethyl-2-selenouridine(34) in tRNA + phosphate. Involved in the post-transcriptional modification of the uridine at the wobble position (U34) of tRNA(Lys), tRNA(Glu) and tRNA(Gln). Catalyzes the conversion of 2-thiouridine (S2U-RNA) to 2-selenouridine (Se2U-RNA). Acts in a two-step process involving geranylation of 2-thiouridine (S2U) to S-geranyl-2-thiouridine (geS2U) and subsequent selenation of the latter derivative to 2-selenouridine (Se2U) in the tRNA chain. The protein is tRNA 2-selenouridine synthase of Salmonella schwarzengrund (strain CVM19633).